Here is a 144-residue protein sequence, read N- to C-terminus: Large ribosomal subunit protein uL15 (144 aa).

The disordered stretch occupies residues 1–54; the sequence is MRLNTLSPAEGSKKAGKRLGRGIGSGLGKTGGRGHKGQKSRSGGGVRRGFEGGQ. Residues 21–31 show a composition bias toward gly residues; sequence RGIGSGLGKTG.

This sequence belongs to the universal ribosomal protein uL15 family. Part of the 50S ribosomal subunit.

Functionally, binds to the 23S rRNA. This is Large ribosomal subunit protein uL15 from Salmonella enteritidis PT4 (strain P125109).